The chain runs to 911 residues: DNA mismatch repair protein MutS (911 aa).

660–667 (GPNMAGKS) is an ATP binding site.

Belongs to the DNA mismatch repair MutS family.

Functionally, this protein is involved in the repair of mismatches in DNA. It is possible that it carries out the mismatch recognition step. This protein has a weak ATPase activity. The sequence is that of DNA mismatch repair protein MutS from Rhodopseudomonas palustris (strain HaA2).